The sequence spans 172 residues: Peptide methionine sulfoxide reductase MsrA 2 (172 aa).

Cys12 is a catalytic residue.

Belongs to the MsrA Met sulfoxide reductase family.

The enzyme catalyses L-methionyl-[protein] + [thioredoxin]-disulfide + H2O = L-methionyl-(S)-S-oxide-[protein] + [thioredoxin]-dithiol. It catalyses the reaction [thioredoxin]-disulfide + L-methionine + H2O = L-methionine (S)-S-oxide + [thioredoxin]-dithiol. Its function is as follows. Has an important function as a repair enzyme for proteins that have been inactivated by oxidation. Catalyzes the reversible oxidation-reduction of methionine sulfoxide in proteins to methionine. This Lactococcus lactis subsp. lactis (strain IL1403) (Streptococcus lactis) protein is Peptide methionine sulfoxide reductase MsrA 2 (msrA2).